Consider the following 367-residue polypeptide: MRWLLPWTLAAVAVLMVGNILATALSPTPTTMTFTPAPLEETITRPEFCKWPCECPQAPPRCPLGVSLITDGCECCKICAQQLGDNCTEAAVCDPHRGLYCDYSGDRPRYAIGVCAQVVGVGCVLDGVRYTNGESFQPNCRYNCTCIDGTVGCTPLCLSPRPPRLWCRQPRHVRVPGQCCEQWVCDDDARRPRQTALLDTRAFAASGAVEQRYENCIAYTSPWSPCSTTCGLGISTRISNVNARCWPEQESRLCNLRPCDVDIRPHIKAGKKCLAVYQPEEATNFTLAGCVSTRTYRPKYCGVCTDNRCCIPYKSKTISVDFQCPEGPGFSRQVLWINACFCNLSCRNPNDIFADLESYPDFAEIAN.

The first 22 residues, 1–22, serve as a signal peptide directing secretion; sequence MRWLLPWTLAAVAVLMVGNILA. The region spanning 45 to 118 is the IGFBP N-terminal domain; the sequence is RPEFCKWPCE…RYAIGVCAQV (74 aa). 4 disulfide bridges follow: Cys-49-Cys-73, Cys-53-Cys-75, Cys-55-Cys-76, and Cys-62-Cys-79. Asn-86 carries N-linked (GlcNAc...) asparagine glycosylation. Intrachain disulfides connect Cys-87-Cys-101 and Cys-93-Cys-115. The region spanning 121 to 186 is the VWFC domain; that stretch reads VGCVLDGVRY…GQCCEQWVCD (66 aa). N-linked (GlcNAc...) asparagine glycosylation is present at Asn-143. The TSP type-1 domain maps to 215–260; it reads NCIAYTSPWSPCSTTCGLGISTRISNVNARCWPEQESRLCNLRPCD. Cystine bridges form between Cys-273–Cys-310, Cys-290–Cys-324, Cys-301–Cys-340, Cys-304–Cys-342, and Cys-309–Cys-346. The CTCK domain occupies 273–347; the sequence is CLAVYQPEEA…NACFCNLSCR (75 aa). Asn-284 carries an N-linked (GlcNAc...) asparagine glycan. A glycan (N-linked (GlcNAc...) asparagine) is linked at Asn-343.

Belongs to the CCN family.

Its subcellular location is the secreted. Its function is as follows. Downstream regulator in the Wnt/Frizzled-signaling pathway. Associated with cell survival. Adheres to skin and melanoma fibroblasts. In vitro binding to skin fibroblasts occurs through the proteoglycans, decorin and biglycan. The sequence is that of CCN family member 4 (Ccn4) from Rattus norvegicus (Rat).